Reading from the N-terminus, the 45-residue chain is Osteocalcin (45 aa).

The Gla domain occupies 1–41 (AAGELTLTQLESLREVCEANLACEDMMDAQGIIAAYTAYYG). Ca(2+) contacts are provided by glutamate 11, glutamate 15, glutamate 18, and glutamate 24. 4-carboxyglutamate occurs at positions 11, 15, and 18. Residues cysteine 17 and cysteine 23 are joined by a disulfide bond.

It belongs to the osteocalcin/matrix Gla protein family. Post-translationally, gamma-carboxyglutamate residues are formed by vitamin K dependent carboxylation by GGCX. These residues are essential for the binding of calcium. As to expression, also found in smaller quantities in dentin.

The protein localises to the secreted. Functionally, the carboxylated form is one of the main organic components of the bone matrix, which constitutes 1-2% of the total bone protein. The carboxylated form binds strongly to apatite and calcium. This Lepomis macrochirus (Bluegill) protein is Osteocalcin (bglap).